A 356-amino-acid polypeptide reads, in one-letter code: tRNA N6-adenosine threonylcarbamoyltransferase (356 aa).

Fe cation is bound by residues His115 and His119. Residues 138–142 (LVSGG), Asp171, Gly184, and Asn283 contribute to the substrate site. Asp311 is a binding site for Fe cation.

Belongs to the KAE1 / TsaD family. The cofactor is Fe(2+).

The protein localises to the cytoplasm. The catalysed reaction is L-threonylcarbamoyladenylate + adenosine(37) in tRNA = N(6)-L-threonylcarbamoyladenosine(37) in tRNA + AMP + H(+). In terms of biological role, required for the formation of a threonylcarbamoyl group on adenosine at position 37 (t(6)A37) in tRNAs that read codons beginning with adenine. Is involved in the transfer of the threonylcarbamoyl moiety of threonylcarbamoyl-AMP (TC-AMP) to the N6 group of A37, together with TsaE and TsaB. TsaD likely plays a direct catalytic role in this reaction. In Prochlorococcus marinus (strain MIT 9515), this protein is tRNA N6-adenosine threonylcarbamoyltransferase.